Reading from the N-terminus, the 160-residue chain is 2-amino-4-hydroxy-6-hydroxymethyldihydropteridine pyrophosphokinase (160 aa).

It belongs to the HPPK family. As to quaternary structure, monomer.

The enzyme catalyses 6-hydroxymethyl-7,8-dihydropterin + ATP = (7,8-dihydropterin-6-yl)methyl diphosphate + AMP + H(+). It participates in cofactor biosynthesis; tetrahydrofolate biosynthesis; 2-amino-4-hydroxy-6-hydroxymethyl-7,8-dihydropteridine diphosphate from 7,8-dihydroneopterin triphosphate: step 4/4. Functionally, catalyzes the transfer of pyrophosphate from adenosine triphosphate (ATP) to 6-hydroxymethyl-7,8-dihydropterin, an enzymatic step in folate biosynthesis pathway. The chain is 2-amino-4-hydroxy-6-hydroxymethyldihydropteridine pyrophosphokinase (folK) from Haemophilus influenzae (strain ATCC 51907 / DSM 11121 / KW20 / Rd).